A 372-amino-acid polypeptide reads, in one-letter code: CXADR-like membrane protein (372 aa).

The first 17 residues, 1 to 17 (MSLFFLWLVTYYVGTLG), serve as a signal peptide directing secretion. Ig-like C2-type domains are found at residues 18–126 (THTE…VILK) and 134–223 (PKCE…VRVT). Over 18 to 234 (THTEIKRVAE…QYVQSIGMVA (217 aa)) the chain is Extracellular. 2 cysteine pairs are disulfide-bonded: Cys-34/Cys-110 and Cys-152/Cys-207. N-linked (GlcNAc...) asparagine glycans are attached at residues Asn-73 and Asn-196. The helical transmembrane segment at 235–255 (GAVTGIVAGALLIFLLIWLLI) threads the bilayer. The Cytoplasmic segment spans residues 256–372 (RRKSKERYEE…PSQSRAFQTV (117 aa)). Residues 263–280 (YEEEDRPNEIREDAEAPR) are compositionally biased toward basic and acidic residues. A disordered region spans residues 263–372 (YEEEDRPNEI…PSQSRAFQTV (110 aa)). Composition is skewed to low complexity over residues 287-313 (SSSS…ASRS) and 352-361 (LTKAETTLST). Polar residues predominate over residues 362 to 372 (MPSQSRAFQTV).

In terms of tissue distribution, predominantly expressed in the white adipose tissue.

Its subcellular location is the cell junction. It is found in the tight junction. The protein localises to the cell membrane. In terms of biological role, may be involved in the cell-cell adhesion. May play a role in adipocyte differentiation and development of obesity. Is required for normal small intestine development. The sequence is that of CXADR-like membrane protein (Clmp) from Rattus norvegicus (Rat).